The sequence spans 32 residues: MSDIN-like toxin proprotein 1 (32 aa).

The propeptide occupies 1–10 (MSDINATCLP). A cross-link (cyclopeptide (Ala-Pro)) is located at residues 11 to 17 (AWLALCP). Positions 18-32 (CVGDDVNPTLTRGGT) are excised as a propeptide.

The protein belongs to the MSDIN fungal toxin family. Processed by the macrocyclase-peptidase enzyme POPB to yield a toxic cyclic heptapeptide. POPB first removes 10 residues from the N-terminus. Conformational trapping of the remaining peptide forces the enzyme to release this intermediate rather than proceed to macrocyclization. The enzyme rebinds the remaining peptide in a different conformation and catalyzes macrocyclization of the N-terminal 7 residues.

Functionally, probable toxin that belongs to the MSDIN-like toxin family responsible for a large number of food poisoning cases and deaths. The polypeptide is MSDIN-like toxin proprotein 1 (Amanita fuligineoides).